A 46-amino-acid polypeptide reads, in one-letter code: Large ribosomal subunit protein bL34c (46 aa).

A disordered region spans residues 1–46 (MSKRTLEGSHRKKVRKSGFLSRSQSPTGRRILKARRKKGRKMLVKY). The span at 30–46 (RILKARRKKGRKMLVKY) shows a compositional bias: basic residues.

The protein belongs to the bacterial ribosomal protein bL34 family.

The protein localises to the plastid. It localises to the cyanelle. This chain is Large ribosomal subunit protein bL34c (rpl34), found in Cyanophora paradoxa.